A 385-amino-acid chain; its full sequence is Mannitol-1-phosphate 5-dehydrogenase (385 aa).

Residue 3 to 14 (AVHFGAGNIGRG) participates in NAD(+) binding.

It belongs to the mannitol dehydrogenase family.

The enzyme catalyses D-mannitol 1-phosphate + NAD(+) = beta-D-fructose 6-phosphate + NADH + H(+). In Geobacillus thermodenitrificans (strain NG80-2), this protein is Mannitol-1-phosphate 5-dehydrogenase.